The primary structure comprises 417 residues: Serine hydroxymethyltransferase (417 aa).

Residues Leu-121 and 125–127 (GHL) each bind (6S)-5,6,7,8-tetrahydrofolate. Residue Lys-229 is modified to N6-(pyridoxal phosphate)lysine. 355-357 (SPF) contributes to the (6S)-5,6,7,8-tetrahydrofolate binding site.

Belongs to the SHMT family. Homodimer. The cofactor is pyridoxal 5'-phosphate.

It localises to the cytoplasm. The catalysed reaction is (6R)-5,10-methylene-5,6,7,8-tetrahydrofolate + glycine + H2O = (6S)-5,6,7,8-tetrahydrofolate + L-serine. It participates in one-carbon metabolism; tetrahydrofolate interconversion. Its pathway is amino-acid biosynthesis; glycine biosynthesis; glycine from L-serine: step 1/1. Functionally, catalyzes the reversible interconversion of serine and glycine with tetrahydrofolate (THF) serving as the one-carbon carrier. This reaction serves as the major source of one-carbon groups required for the biosynthesis of purines, thymidylate, methionine, and other important biomolecules. Also exhibits THF-independent aldolase activity toward beta-hydroxyamino acids, producing glycine and aldehydes, via a retro-aldol mechanism. This Xanthomonas oryzae pv. oryzae (strain MAFF 311018) protein is Serine hydroxymethyltransferase.